A 363-amino-acid chain; its full sequence is Neutral protease 2 homolog NFIA_102630 (363 aa).

An N-terminal signal peptide occupies residues 1–19 (MKVTVLASAILALINGALA). The propeptide occupies 20-172 (LPANAPTLDV…PQAIKLLDRR (153 aa)). 2 disulfides stabilise this stretch: Cys178-Cys250 and Cys257-Cys275. Position 300 (His300) interacts with Zn(2+). Residue Glu301 is part of the active site. Zn(2+) is bound by residues His304 and Asp315.

This sequence belongs to the peptidase M35 family. Zn(2+) is required as a cofactor.

Its subcellular location is the secreted. It catalyses the reaction Preferential cleavage of bonds with hydrophobic residues in P1'. Also 3-Asn-|-Gln-4 and 8-Gly-|-Ser-9 bonds in insulin B chain.. Secreted metalloproteinase that allows assimilation of proteinaceous substrates. Shows high activities on basic nuclear substrates such as histone and protamine. The protein is Neutral protease 2 homolog NFIA_102630 of Neosartorya fischeri (strain ATCC 1020 / DSM 3700 / CBS 544.65 / FGSC A1164 / JCM 1740 / NRRL 181 / WB 181) (Aspergillus fischerianus).